A 231-amino-acid polypeptide reads, in one-letter code: Type 3 secretion system stator protein (231 aa).

In terms of assembly, the core secretion machinery of the T3SS is composed of approximately 20 different proteins, including cytoplasmic components, a base, an export apparatus and a needle. This subunit is part of the cytosolic complex. Interacts directly with Spa47/SctN (T3SS ATPase) and Spa33/SctQ (the major sorting platform component). Homodimer in solution.

Its subcellular location is the cytoplasm. Component of the type III secretion system (T3SS), also called injectisome, which is used to inject bacterial effector proteins into eukaryotic host cells. Acts as a regulator of the Spa47/SctN ATPase activity. It down-regulates the ATPase activity of the oligomeric Spa47/SctN, while it up-regulates the activity of the monomeric form. Important for translocation of MxiH/SctF, the major needle component. The chain is Type 3 secretion system stator protein from Shigella flexneri.